Here is a 1052-residue protein sequence, read N- to C-terminus: MKLVNIWLLLLVVLLCGKKHLGDRLEKKSFEKAPCPGCSHLTLKVEFSSTVVEYEYIVAFNGYFTAKARNSFISSALKSSEVDNWRIIPRNNPSSDYPSDFEVIQIKEKQKAGLLTLEDHPNIKRVTPQRKVFRSLKYAESDPTVPCNETRWSQKWQSSRPLRRASLSLGSGFWHATGRHSSRRLLRAIPRQVAQTLQADVLWQMGYTGANVRVAVFDTGLSEKHPHFKNVKERTNWTNERTLDDGLGHGTFVAGVIASMRECQGFAPDAELHIFRVFTNNQVSYTSWFLDAFNYAILKKIDVLNLSIGGPDFMDHPFVDKVWELTANNVIMVSAIGNDGPLYGTLNNPADQMDVIGVGGIDFEDNIARFSSRGMTTWELPGGYGRMKPDIVTYGAGVRGSGVKGGCRALSGTSVASPVVAGAVTLLVSTVQKRELVNPASMKQALIASARRLPGVNMFEQGHGKLDLLRAYQILNSYKPQASLSPSYIDLTECPYMWPYCSQPIYYGGMPTVVNVTILNGMGVTGRIVDKPDWQPYLPQNGDNIEVAFSYSSVLWPWSGYLAISISVTKKAASWEGIAQGHVMITVASPAETESKNGAEQTSTVKLPIKVKIIPTPPRSKRVLWDQYHNLRYPPGYFPRDNLRMKNDPLDWNGDHIHTNFRDMYQHLRSMGYFVEVLGAPFTCFDASQYGTLLMVDSEEEYFPEEIAKLRRDVDNGLSLVIFSDWYNTSVMRKVKFYDENTRQWWMPDTGGANIPALNELLSVWNMGFSDGLYEGEFTLANHDMYYASGCSIAKFPEDGVVITQTFKDQGLEVLKQETAVVENVPILGLYQIPAEGGGRIVLYGDSNCLDDSHRQKDCFWLLDALLQYTSYGVTPPSLSHSGNRQRPPSGAGSVTPERMEGNHLHRYSKVLEAHLGDPKPRPLPACPRLSWAKPQPLNETAPSNLWKHQKLLSIDLDKVVLPNFRSNRPQVRPLSPGESGAWDIPGGIMPGRYNQEVGQTIPVFAFLGAMVVLAFFVVQINKAKSRPKRRKPRVKRPQLMQQVHPPKTPSV.

A signal peptide spans 1–17 (MKLVNIWLLLLVVLLCG). Residues 18–186 (KKHLGDRLEK…TGRHSSRRLL (169 aa)) constitute a propeptide that is removed on maturation. Phosphoserine; by FAM20C is present on Ser168. At 187 to 998 (RAIPRQVAQT…IMPGRYNQEV (812 aa)) the chain is on the lumenal side. The region spanning 190 to 472 (PRQVAQTLQA…HGKLDLLRAY (283 aa)) is the Peptidase S8 domain. The active-site Charge relay system is the Asp218. Residue Asn236 is glycosylated (N-linked (GlcNAc...) asparagine). Catalysis depends on His249, which acts as the Charge relay system. N-linked (GlcNAc...) asparagine glycosylation is present at Asn305. Residue Ser414 is the Charge relay system of the active site. 2 N-linked (GlcNAc...) asparagine glycosylation sites follow: Asn515 and Asn728. Residues 877 to 887 (PSLSHSGNRQR) show a composition bias toward polar residues. Residues 877–899 (PSLSHSGNRQRPPSGAGSVTPER) are disordered. An N-linked (GlcNAc...) asparagine glycan is attached at Asn939. The helical transmembrane segment at 999-1021 (GQTIPVFAFLGAMVVLAFFVVQI) threads the bilayer. Topologically, residues 1022 to 1052 (NKAKSRPKRRKPRVKRPQLMQQVHPPKTPSV) are cytoplasmic. Residues 1027–1037 (RPKRRKPRVKR) show a composition bias toward basic residues. The disordered stretch occupies residues 1027–1052 (RPKRRKPRVKRPQLMQQVHPPKTPSV).

This sequence belongs to the peptidase S8 family. As to quaternary structure, interacts with LYSET; this interaction bridges GNPTAB to MBTPS1. Requires Ca(2+) as cofactor. The 148 kDa zymogen is processed progressively into two membrane-bound 120 and 106 kDa forms in the endoplasmic reticulum, and late into a secreted 98 kDa form. The propeptide is autocatalytically removed through an intramolecular cleavage after Leu-186. Further cleavage generates 14, 10, and 8 kDa intermediates. In terms of tissue distribution, widely expressed.

The protein resides in the endoplasmic reticulum membrane. Its subcellular location is the golgi apparatus membrane. It carries out the reaction Processes precursors containing basic and hydrophobic/aliphatic residues at P4 and P2, respectively, with a relatively relaxed acceptance of amino acids at P1 and P3.. Its activity is regulated as follows. Inhibited by divalent copper and zinc ions, but not by nickel or cobalt. Inhibited by its prosegment, but not smaller fragments. Inhibited by 4-(2-aminoethyl)benzenesulfonyl fluoride (AEBSF), a serine protease inhibitor. Functionally, serine protease that cleaves after hydrophobic or small residues, provided that Arg or Lys is in position P4: known substrates include SREBF1/SREBP1, SREBF2/SREBP2, BDNF, GNPTAB, ATF6, ATF6B and FAM20C. Cleaves substrates after Arg-Ser-Val-Leu (SREBP2), Arg-His-Leu-Leu (ATF6), Arg-Gly-Leu-Thr (BDNF) and its own propeptide after Arg-Arg-Leu-Leu. Catalyzes the first step in the proteolytic activation of the sterol regulatory element-binding proteins (SREBPs) SREBF1/SREBP1 and SREBF2/SREBP2. Also mediates the first step in the proteolytic activation of the cyclic AMP-dependent transcription factor ATF-6 (ATF6 and ATF6B). Mediates the protein cleavage of GNPTAB into subunit alpha and beta, thereby participating in biogenesis of lysosomes. Cleaves the propeptide from FAM20C which is required for FAM20C secretion from the Golgi apparatus membrane and for enhancement of FAM20C kinase activity, promoting osteoblast differentiation and biomineralization. Involved in the regulation of M6P-dependent Golgi-to-lysosome trafficking of lysosomal enzymes. It is required for the activation of CREB3L2/BBF2H7, a transcriptional activator of MIA3/TANGO and other genes controlling mega vesicle formation. Therefore, it plays a key role in the regulation of mega vesicle-mediated collagen trafficking. In astrocytes and osteoblasts, upon DNA damage and ER stress, mediates the first step of the regulated intramembrane proteolytic activation of the transcription factor CREB3L1, leading to the inhibition of cell-cycle progression. The protein is Membrane-bound transcription factor site-1 protease of Homo sapiens (Human).